The sequence spans 552 residues: CTP synthase (552 aa).

Residues 1-267 (MSKFVFVTGG…AHQTLELLRM (267 aa)) are amidoligase domain. Ser13 is a binding site for CTP. Ser13 contributes to the UTP binding site. Residues 14 to 19 (SIGKGI) and Asp71 contribute to the ATP site. Positions 71 and 141 each coordinate Mg(2+). CTP-binding positions include 148–150 (DIE), 188–193 (KTKPTQ), and Lys224. Residues 188–193 (KTKPTQ) and Lys224 each bind UTP. The Glutamine amidotransferase type-1 domain maps to 292–534 (TVALVGKYVQ…INAVLKRRNA (243 aa)). Gly354 serves as a coordination point for L-glutamine. Cys381 functions as the Nucleophile; for glutamine hydrolysis in the catalytic mechanism. Residues 382 to 385 (LGMQ), Glu405, and Arg462 each bind L-glutamine. Active-site residues include His507 and Glu509.

Belongs to the CTP synthase family. In terms of assembly, homotetramer.

It carries out the reaction UTP + L-glutamine + ATP + H2O = CTP + L-glutamate + ADP + phosphate + 2 H(+). The catalysed reaction is L-glutamine + H2O = L-glutamate + NH4(+). The enzyme catalyses UTP + NH4(+) + ATP = CTP + ADP + phosphate + 2 H(+). It participates in pyrimidine metabolism; CTP biosynthesis via de novo pathway; CTP from UDP: step 2/2. Its activity is regulated as follows. Allosterically activated by GTP, when glutamine is the substrate; GTP has no effect on the reaction when ammonia is the substrate. The allosteric effector GTP functions by stabilizing the protein conformation that binds the tetrahedral intermediate(s) formed during glutamine hydrolysis. Inhibited by the product CTP, via allosteric rather than competitive inhibition. Its function is as follows. Catalyzes the ATP-dependent amination of UTP to CTP with either L-glutamine or ammonia as the source of nitrogen. Regulates intracellular CTP levels through interactions with the four ribonucleotide triphosphates. This Synechocystis sp. (strain ATCC 27184 / PCC 6803 / Kazusa) protein is CTP synthase.